Reading from the N-terminus, the 805-residue chain is Ubiquitin carboxyl-terminal hydrolase 10-B (805 aa).

Disordered stretches follow at residues 136–173 and 284–305; these read AIPDGSGNADSDGTSGTGQRERKKKKKRPPGYYSYLEG and DTTENLGVTNGQTLESPEEDTV. Composition is skewed to polar residues over residues 143-153 and 284-298; these read NADSDGTSGTG and DTTENLGVTNGQTLE. Residues 422 to 802 form the USP domain; it reads RGLINKGNWC…TAYLLYYRRV (381 aa). The active-site Nucleophile is the Cys-431. Residues 573-600 are disordered; the sequence is EEVNKEEQEGSDEEWEQVGPRNKSSVTR. Catalysis depends on His-756, which acts as the Proton acceptor.

This sequence belongs to the peptidase C19 family. USP10 subfamily.

The protein localises to the cytoplasm. Its subcellular location is the nucleus. The catalysed reaction is Thiol-dependent hydrolysis of ester, thioester, amide, peptide and isopeptide bonds formed by the C-terminal Gly of ubiquitin (a 76-residue protein attached to proteins as an intracellular targeting signal).. In terms of biological role, hydrolase that can remove conjugated ubiquitin from target proteins such as p53/tp53, rps2/us5, rps3/us3, rps10/eS10, becn1, snx3 and cftr. Acts as an essential regulator of p53/tp53 stability: in unstressed cells, specifically deubiquitinates p53/tp53 in the cytoplasm, leading to counteracts MDM2 action and stabilize p53/tp53. Following DNA damage, translocates to the nucleus and deubiquitinates p53/tp53, leading to regulate the p53/TP53-dependent DNA damage response. Component of a regulatory loop that controls autophagy and p53/tp53 levels. Plays a key role in 40S ribosome subunit recycling when a ribosome has stalled during translation: acts both by inhibiting formation of stress granules, which store stalled translation pre-initiation complexes, and mediating deubiquitination of 40S ribosome subunits. Deubiquitinates cftr in early endosomes, enhancing its endocytic recycling. The chain is Ubiquitin carboxyl-terminal hydrolase 10-B (usp10-b) from Xenopus laevis (African clawed frog).